The sequence spans 443 residues: Glutamate-1-semialdehyde 2,1-aminomutase (443 aa).

Residues 1–16 (MSVNADSQHSNNSSHQ) show a composition bias toward low complexity. The segment at 1–22 (MSVNADSQHSNNSSHQASEKAF) is disordered. Lys-277 is modified (N6-(pyridoxal phosphate)lysine).

This sequence belongs to the class-III pyridoxal-phosphate-dependent aminotransferase family. HemL subfamily. As to quaternary structure, homodimer. Requires pyridoxal 5'-phosphate as cofactor.

The protein localises to the cytoplasm. It carries out the reaction (S)-4-amino-5-oxopentanoate = 5-aminolevulinate. It functions in the pathway porphyrin-containing compound metabolism; protoporphyrin-IX biosynthesis; 5-aminolevulinate from L-glutamyl-tRNA(Glu): step 2/2. The protein is Glutamate-1-semialdehyde 2,1-aminomutase of Corynebacterium jeikeium (strain K411).